We begin with the raw amino-acid sequence, 319 residues long: Alpha/beta-gliadin A-V (319 aa).

An N-terminal signal peptide occupies residues 1 to 20 (MKTFLILALLAIVATTATTA). Positions 28–58 (LQPQNPSQQQPQEQVPLVQQQQFPGQQQQFP) are enriched in low complexity. 2 disordered regions span residues 28-125 (LQPQ…QQAQ) and 258-278 (SQVS…VQPQ). 2 stretches are compositionally biased toward pro residues: residues 59–71 (PQQP…PFPS) and 81–104 (FPQP…PQQP). Positions 105–125 (YPQQQPQYLQPQQPISQQQAQ) are enriched in low complexity. Polar residues predominate over residues 267-278 (LNPQAQGSVQPQ).

Belongs to the gliadin/glutenin family. In terms of processing, substrate of transglutaminase.

In terms of biological role, gliadin is the major seed storage protein in wheat. The polypeptide is Alpha/beta-gliadin A-V (Triticum aestivum (Wheat)).